The following is a 597-amino-acid chain: Pentatricopeptide repeat-containing protein At2g21090 (597 aa).

PPR repeat units lie at residues 45–79 (PFDLLASLLQQCGDTKSLKQGKWIHRHLKITGFKR), 81–111 (NTLLSNHLIGMYMKCGKPIDACKVFDQMHLR), 112–142 (NLYSWNNMVSGYVKSGMLVRARVVFDSMPER), 143–177 (DVVSWNTMVIGYAQDGNLHEALWFYKEFRRSGIKF), 178–212 (NEFSFAGLLTACVKSRQLQLNRQAHGQVLVAGFLS), 213–243 (NVVLSCSIIDAYAKCGQMESAKRCFDEMTVK), 244–274 (DIHIWTTLISGYAKLGDMEAAEKLFCEMPEK), 275–309 (NPVSWTALIAGYVRQGSGNRALDLFRKMIALGVKP), 310–344 (EQFTFSSCLCASASIASLRHGKEIHGYMIRTNVRP), 345–375 (NAIVISSLIDMYSKSGSLEASERVFRICDDK), 377–411 (DCVFWNTMISALAQHGLGHKALRMLDDMIKFRVQP), 412–447 (NRTTLVVILNACSHSGLVEEGLRWFESMTVQHGIVP), and 448–478 (DQEHYACLIDLLGRAGCFKELMRKIEEMPFE). The segment at 483–558 (IWNAILGVCR…EKAVSWIEIE (76 aa)) is type E motif. The interval 559-591 (KKVEAFTVSDGSHAHARKEEIYFILHNLAAVIE) is type E(+) motif.

Belongs to the PPR family. PCMP-E subfamily.

The polypeptide is Pentatricopeptide repeat-containing protein At2g21090 (PCMP-E48) (Arabidopsis thaliana (Mouse-ear cress)).